A 279-amino-acid polypeptide reads, in one-letter code: tRNA pseudouridine synthase A (279 aa).

D54 serves as the catalytic Nucleophile. Position 112 (Y112) interacts with substrate.

Belongs to the tRNA pseudouridine synthase TruA family. In terms of assembly, homodimer.

The enzyme catalyses uridine(38/39/40) in tRNA = pseudouridine(38/39/40) in tRNA. Its function is as follows. Formation of pseudouridine at positions 38, 39 and 40 in the anticodon stem and loop of transfer RNAs. This is tRNA pseudouridine synthase A from Cutibacterium acnes (strain DSM 16379 / KPA171202) (Propionibacterium acnes).